Consider the following 292-residue polypeptide: 5,10-methylenetetrahydrofolate reductase (292 aa).

E28 acts as the Proton donor/acceptor in catalysis. T59 contacts NADH. The FAD site is built by Y60, A62, H88, R118, G119, D120, A132, Y152, H156, D165, N168, K171, and K172. D120 provides a ligand contact to (6S)-5-methyl-5,6,7,8-tetrahydrofolate. Q183 is a binding site for NADH. The (6S)-5-methyl-5,6,7,8-tetrahydrofolate site is built by Q183, Q219, and K279.

This sequence belongs to the methylenetetrahydrofolate reductase family. The cofactor is FAD.

It catalyses the reaction (6S)-5-methyl-5,6,7,8-tetrahydrofolate + NAD(+) = (6R)-5,10-methylene-5,6,7,8-tetrahydrofolate + NADH + H(+). It participates in one-carbon metabolism; tetrahydrofolate interconversion. The protein operates within amino-acid biosynthesis; L-methionine biosynthesis via de novo pathway. Catalyzes the NADH-dependent reduction of 5,10-methylenetetrahydrofolate to 5-methyltetrahydrofolate. Is required to provide the methyl group necessary for methionine synthetase to convert homocysteine to methionine; the methyl group is given by 5-methyltetrahydrofolate. This chain is 5,10-methylenetetrahydrofolate reductase (metF), found in Buchnera aphidicola subsp. Schizaphis graminum (strain Sg).